The primary structure comprises 310 residues: L-lactate dehydrogenase (310 aa).

NAD(+) contacts are provided by residues Val-11, Asp-32, Tyr-62, and 76-77 (GV). Substrate-binding positions include Gln-79, Arg-85, and 117–120 (NPVD). Residues 115 to 117 (ATN) and Ser-140 each bind NAD(+). 145–148 (DTAR) is a binding site for substrate. Positions 150 and 165 each coordinate beta-D-fructose 1,6-bisphosphate. His-172 acts as the Proton acceptor in catalysis. The residue at position 218 (Tyr-218) is a Phosphotyrosine. Thr-227 is a substrate binding site.

The protein belongs to the LDH/MDH superfamily. LDH family. As to quaternary structure, homotetramer.

The protein localises to the cytoplasm. The catalysed reaction is (S)-lactate + NAD(+) = pyruvate + NADH + H(+). Its pathway is fermentation; pyruvate fermentation to lactate; (S)-lactate from pyruvate: step 1/1. With respect to regulation, activated by citrate at pH 5. Allosterically activated by fructose 1,6-bisphosphate (FBP) at pH from 5.8 to 7.2. In terms of biological role, catalyzes the conversion of lactate to pyruvate. In Thermus aquaticus, this protein is L-lactate dehydrogenase.